The sequence spans 569 residues: Myotubularin-related protein 9 (569 aa).

The Myotubularin phosphatase domain maps to 134–513 (GWSAFDLEQE…QCIKIWDRLF (380 aa)).

It belongs to the protein-tyrosine phosphatase family. Non-receptor class myotubularin subfamily. Heterodimer with lipid phosphatase mtm-6.

The protein resides in the cytoplasm. It localises to the membrane. Its function is as follows. May act as a regulatory subunit for mtm-6. In association with phosphatase mtm-6, plays a role in endosome trafficking probably by regulating phosphatidylinositol-3-phosphate levels. Regulates fluid phase endocytosis in coelomocytes. Regulates posterior migration of QL neuroblast descendants and the anterior migration of QR neuroblast descendants and HSN neurons during larval development probably by controlling Wnt ligand secretion through the regulation of sorting receptor mig-14 trafficking. Involved in the formation of correct synapse number in DA9 motor neurons. This chain is Myotubularin-related protein 9, found in Caenorhabditis elegans.